The sequence spans 342 residues: Ribosomal RNA small subunit methyltransferase H (342 aa).

S-adenosyl-L-methionine is bound by residues 36–38, Asp-56, Phe-82, Asp-100, and Gln-107; that span reads GGH. The segment at 309 to 342 is disordered; the sequence is ENRESGMGKGHGAAASRFPTPDSRFPTSPNGDAP. Positions 333–342 are enriched in polar residues; that stretch reads FPTSPNGDAP.

It belongs to the methyltransferase superfamily. RsmH family.

It is found in the cytoplasm. It carries out the reaction cytidine(1402) in 16S rRNA + S-adenosyl-L-methionine = N(4)-methylcytidine(1402) in 16S rRNA + S-adenosyl-L-homocysteine + H(+). Its function is as follows. Specifically methylates the N4 position of cytidine in position 1402 (C1402) of 16S rRNA. The sequence is that of Ribosomal RNA small subunit methyltransferase H from Xanthomonas campestris pv. campestris (strain 8004).